A 30-amino-acid chain; its full sequence is Cycloviolacin-O2 (30 aa).

The cyclopeptide (Gly-Asn) cross-link spans 1 to 30 (GIPCGESCVWIPCISSAIGCSCKSKVCYRN). Disulfide bonds link cysteine 4-cysteine 20, cysteine 8-cysteine 22, and cysteine 13-cysteine 27.

In terms of processing, this is a cyclic peptide.

In terms of biological role, probably participates in a plant defense mechanism. The polypeptide is Cycloviolacin-O2 (Viola biflora (Yellow wood violet)).